Here is a 270-residue protein sequence, read N- to C-terminus: 3-methyl-2-oxobutanoate hydroxymethyltransferase (270 aa).

Mg(2+) is bound by residues Asp-41 and Asp-80. Residues 41–42 (DS), Asp-80, and Lys-109 contribute to the 3-methyl-2-oxobutanoate site. Glu-111 lines the Mg(2+) pocket. Catalysis depends on Glu-178, which acts as the Proton acceptor.

This sequence belongs to the PanB family. In terms of assembly, homodecamer; pentamer of dimers. The cofactor is Mg(2+).

It is found in the cytoplasm. It carries out the reaction 3-methyl-2-oxobutanoate + (6R)-5,10-methylene-5,6,7,8-tetrahydrofolate + H2O = 2-dehydropantoate + (6S)-5,6,7,8-tetrahydrofolate. The protein operates within cofactor biosynthesis; (R)-pantothenate biosynthesis; (R)-pantoate from 3-methyl-2-oxobutanoate: step 1/2. Functionally, catalyzes the reversible reaction in which hydroxymethyl group from 5,10-methylenetetrahydrofolate is transferred onto alpha-ketoisovalerate to form ketopantoate. The protein is 3-methyl-2-oxobutanoate hydroxymethyltransferase of Thermotoga sp. (strain RQ2).